Reading from the N-terminus, the 352-residue chain is Outer membrane protein assembly factor BamC (352 aa).

The N-terminal stretch at 1 to 19 (MQYWIPKALAVSVLVSLSG) is a signal peptide. Cys20 carries N-palmitoyl cysteine lipidation. Cys20 is lipidated: S-diacylglycerol cysteine.

This sequence belongs to the BamC family. Part of the Bam complex.

It localises to the cell outer membrane. In terms of biological role, part of the outer membrane protein assembly complex, which is involved in assembly and insertion of beta-barrel proteins into the outer membrane. The chain is Outer membrane protein assembly factor BamC from Pseudoalteromonas sp. (strain SM9913).